An 84-amino-acid polypeptide reads, in one-letter code: MAHKKSGGASRNGRDSNPKYLGVKRFEGQIVDAGNILVRQRGTKIYPGINVGLGRDFTLYALKPGIVKFSIKHGKKYVNVLPIQ.

The disordered stretch occupies residues 1 to 20 (MAHKKSGGASRNGRDSNPKY).

It belongs to the bacterial ribosomal protein bL27 family.

This is Large ribosomal subunit protein bL27 from Dictyoglomus thermophilum (strain ATCC 35947 / DSM 3960 / H-6-12).